A 395-amino-acid polypeptide reads, in one-letter code: MNADWLHAIEEKLTRLKDRGSFRQLVPTSEAALPWLTRENCRLLNLASNNYLGIADSKEFIERTEQLASSYAIGSTASRLIIGNHPLYEEAEYELTKWKKTEAALIFGSGYMANVGIISSIVGRGDAVFSDKLNHASIVDGCQLSRADHLRFRHNDMDHLETLLQKSPHKQKLIVVDALFSMDGDHANLHDLVTLKERYGAILMVDEAHSGGVYGATGGGLVEELGLNDRVDIQMGTFSKALGSYGGYVAGAKPFIEYLLNHARSLIFTTALPPYIVASHLAALQIVQEQPWRREKVQVLGERLRNGLEQLGFSLCGSESYIVPVLIGDNHDLLLVSESLQAAGIAAIPVRPPTVPRGEGRIRLTVTASHTEKDIDWAIEQFQRLPLVGRRELTP.

Arg23 contacts substrate. A pyridoxal 5'-phosphate-binding site is contributed by 110 to 111; the sequence is GY. His135 is a binding site for substrate. Residues Ser181, 206–209, and 237–240 contribute to the pyridoxal 5'-phosphate site; these read DEAH and TFSK. Lys240 carries the post-translational modification N6-(pyridoxal phosphate)lysine. Thr354 contacts substrate.

It belongs to the class-II pyridoxal-phosphate-dependent aminotransferase family. BioF subfamily. Homodimer. The cofactor is pyridoxal 5'-phosphate.

It carries out the reaction 6-carboxyhexanoyl-[ACP] + L-alanine + H(+) = (8S)-8-amino-7-oxononanoate + holo-[ACP] + CO2. It functions in the pathway cofactor biosynthesis; biotin biosynthesis. In terms of biological role, catalyzes the decarboxylative condensation of pimeloyl-[acyl-carrier protein] and L-alanine to produce 8-amino-7-oxononanoate (AON), [acyl-carrier protein], and carbon dioxide. This is Putative 8-amino-7-oxononanoate synthase (bioF) from Halalkalibacterium halodurans (strain ATCC BAA-125 / DSM 18197 / FERM 7344 / JCM 9153 / C-125) (Bacillus halodurans).